Consider the following 87-residue polypeptide: U3-theraphotoxin-Hhn1a 17 (87 aa).

The first 24 residues, 1–24 (MVNVKASMFLTFAGLVLLFVVCYA), serve as a signal peptide directing secretion. The propeptide occupies 25–52 (SESEEKEFPKEMLSSIFAVDNDFKQEER). 3 disulfide bridges follow: Cys54/Cys67, Cys61/Cys72, and Cys66/Cys79.

Belongs to the neurotoxin 10 (Hwtx-1) family. 51 (Hntx-8) subfamily. Hntx-8 sub-subfamily. Expressed by the venom gland.

The protein localises to the secreted. Its function is as follows. Ion channel inhibitor. The chain is U3-theraphotoxin-Hhn1a 17 from Cyriopagopus hainanus (Chinese bird spider).